The sequence spans 611 residues: Pleckstrin homology domain-containing family N member 1 (611 aa).

The tract at residues 1-45 is disordered; sequence MGNSHCVPQAPRRLRASFSRKPSLKGNREDSARMSAGLPGPEAAR. Residue glycine 2 is the site of N-myristoyl glycine attachment. Residues 61-100 form an interaction with C1QBP region; it reads TDILDLENQRENLEQPFLSVFKKGRRRVPVRNLGKVVHYA. PH domains lie at 96–192 and 222–319; these read VVHY…TALL and AVCA…THRE. A Phosphotyrosine modification is found at tyrosine 302. 3 disordered regions span residues 323–424, 438–468, and 483–611; these read PLPG…PVTP, ESSP…TSHR, and MQSA…VQWI. Residues 341–350 are compositionally biased toward low complexity; it reads GSLSSGGQTS. The segment covering 360–391 has biased composition (polar residues); sequence STRTSHSLPESSVPSTVGCSSQHTPDQANSDR. Residue tyrosine 456 is modified to Phosphotyrosine. A compositionally biased stretch (low complexity) spans 498–509; sequence VPVSVPASDPRS. Serine 559 bears the Phosphoserine mark. The span at 570-585 shows a compositional bias: basic and acidic residues; that stretch reads RSPRRSRDPGYDHLWD.

In terms of assembly, found in a complex with cytochrome c mRNA and various ribosomal proteins. Interacts with C1QBP. Interacts with ELAVL1. Interacts with BID. Phosphorylation is essential for its mitochondrial localization and regulates its interaction with C1QBP. Ubiquitous. Epressed in several cancer cell lines of differing origin.

Its subcellular location is the cell membrane. It is found in the mitochondrion. The protein localises to the mitochondrion membrane. In terms of biological role, controls the stability of the leptin mRNA harboring an AU-rich element (ARE) in its 3' UTR, in cooperation with the RNA stabilizer ELAVL1. Decreases the stability of the leptin mRNA by antagonizing the function of ELAVL1 by inducing its atypical recruitment from the nucleus to the cytosol. Binds to cardiolipin (CL), phosphatidic acid (PA), phosphatidylinositol 4-phosphate (PtdIns(4)P) and phosphatidylserine (PS). Promotes apoptosis by enhancing BAX-BAK hetero-oligomerization via interaction with BID in colon cancer cells. This chain is Pleckstrin homology domain-containing family N member 1 (PLEKHN1), found in Homo sapiens (Human).